The following is a 700-amino-acid chain: MVYDPIRDCDVPAPHISAPPLSRSRSPPPPHRTPSASGSLRGLLNDSPPPREPPRAASVHEDAESHRPKLSNILNDAEPPRQRSMLPPQQPIHAELEHGRRTSAGSHAAQLARSPSMSLSPRSQNQSLPYPSSRPGSAAGSAHPFGYDPRQGTLSPVLSARRTSEDQPRPTSSSSASGRRYTEPASQTPAPAPLGSSAYRPRHTSTPGNPSSAYAPRFTPQPTTTPSSPSTSQHTPYTPHHSAPPRILHYNPHRQSAPSSVLRPIYPDEVAHLRQLAHANNPLRQKPAARRYSYSGGRAPEPTPTPRTSLPGENDHSYFPPQWDDRPSMPPSEVSYGGPPSSTPGAPPSGYSQYPPNWEAQTPGGNWNGERPGRLGKRRARDEEDDEYERNKRVVSGPVAGQAYSKKVTVVAEHYNSRPEVGVERREFSPIIGLKKFNNWIKSVLIGKFAYRPRGKVLDVGCGKGGDLNKWKQARIALYVGLDVADQSVQQAADRYRRMPKPGFDAFFYAHDCFSNPLSDVLSPELQIKDLYDNVTMQFCMHYAFENAAKARMMIENVSRYLRRGGIFIGTIPNAELLLQLPDRDEELRFGNSCYSIQFTERRHKGVYGHDYRFYLTDAVEDVPEYLVDWENFVSLASESGLRLVYKKAFHEILQEEKDSRDFGPLLGKMGVLNEYGESAMDADQWEAANLYMGFAFEKM.

Composition is skewed to basic and acidic residues over residues methionine 1–aspartate 10 and glutamate 52–arginine 67. Disordered stretches follow at residues methionine 1–arginine 263 and alanine 277–lysine 392. The span at arginine 113–leucine 128 shows a compositional bias: polar residues. Composition is skewed to low complexity over residues proline 129 to proline 144 and proline 220 to histidine 241. In terms of domain architecture, mRNA cap 0 methyltransferase spans serine 429–methionine 700. Asparagine 438 to asparagine 439 is a binding site for mRNA. S-adenosyl-L-methionine is bound by residues lysine 442, glycine 461, aspartate 483, aspartate 512, glutamine 538, and tyrosine 543.

It belongs to the class I-like SAM-binding methyltransferase superfamily. mRNA cap 0 methyltransferase family.

It is found in the nucleus. The enzyme catalyses a 5'-end (5'-triphosphoguanosine)-ribonucleoside in mRNA + S-adenosyl-L-methionine = a 5'-end (N(7)-methyl 5'-triphosphoguanosine)-ribonucleoside in mRNA + S-adenosyl-L-homocysteine. Its function is as follows. Responsible for methylating the 5'-cap structure of mRNAs. This is mRNA cap guanine-N(7) methyltransferase (ABD1) from Cryptococcus neoformans var. neoformans serotype D (strain B-3501A) (Filobasidiella neoformans).